Here is a 247-residue protein sequence, read N- to C-terminus: tRNA pseudouridine synthase A (247 aa).

The active-site Nucleophile is Asp-52. Tyr-113 contributes to the substrate binding site.

The protein belongs to the tRNA pseudouridine synthase TruA family. As to quaternary structure, homodimer.

The catalysed reaction is uridine(38/39/40) in tRNA = pseudouridine(38/39/40) in tRNA. Its function is as follows. Formation of pseudouridine at positions 38, 39 and 40 in the anticodon stem and loop of transfer RNAs. This Bartonella henselae (strain ATCC 49882 / DSM 28221 / CCUG 30454 / Houston 1) (Rochalimaea henselae) protein is tRNA pseudouridine synthase A.